The following is a 957-amino-acid chain: Glycine dehydrogenase (decarboxylating) (957 aa).

Lys708 carries the post-translational modification N6-(pyridoxal phosphate)lysine.

Belongs to the GcvP family. The glycine cleavage system is composed of four proteins: P, T, L and H. Pyridoxal 5'-phosphate serves as cofactor.

It catalyses the reaction N(6)-[(R)-lipoyl]-L-lysyl-[glycine-cleavage complex H protein] + glycine + H(+) = N(6)-[(R)-S(8)-aminomethyldihydrolipoyl]-L-lysyl-[glycine-cleavage complex H protein] + CO2. Functionally, the glycine cleavage system catalyzes the degradation of glycine. The P protein binds the alpha-amino group of glycine through its pyridoxal phosphate cofactor; CO(2) is released and the remaining methylamine moiety is then transferred to the lipoamide cofactor of the H protein. The chain is Glycine dehydrogenase (decarboxylating) from Salmonella newport (strain SL254).